A 308-amino-acid chain; its full sequence is Ornithine carbamoyltransferase (308 aa).

Residues 55–58 (STRT), Gln-82, Arg-106, and 133–136 (HPCQ) each bind carbamoyl phosphate. L-ornithine contacts are provided by residues Asn-164, Asp-227, and 231-232 (SM). Carbamoyl phosphate-binding positions include 267–268 (CL) and Arg-295.

The protein belongs to the aspartate/ornithine carbamoyltransferase superfamily. OTCase family.

Its subcellular location is the cytoplasm. It carries out the reaction carbamoyl phosphate + L-ornithine = L-citrulline + phosphate + H(+). It participates in amino-acid biosynthesis; L-arginine biosynthesis; L-arginine from L-ornithine and carbamoyl phosphate: step 1/3. Functionally, reversibly catalyzes the transfer of the carbamoyl group from carbamoyl phosphate (CP) to the N(epsilon) atom of ornithine (ORN) to produce L-citrulline. This is Ornithine carbamoyltransferase from Prochlorococcus marinus (strain MIT 9312).